The following is a 203-amino-acid chain: FMN-dependent NADH:quinone oxidoreductase (203 aa).

Residues Ser9, 15-17 (SVS), and 138-141 (SRGG) contribute to the FMN site.

Belongs to the azoreductase type 1 family. In terms of assembly, homodimer. The cofactor is FMN.

The catalysed reaction is 2 a quinone + NADH + H(+) = 2 a 1,4-benzosemiquinone + NAD(+). The enzyme catalyses N,N-dimethyl-1,4-phenylenediamine + anthranilate + 2 NAD(+) = 2-(4-dimethylaminophenyl)diazenylbenzoate + 2 NADH + 2 H(+). Its function is as follows. Quinone reductase that provides resistance to thiol-specific stress caused by electrophilic quinones. In terms of biological role, also exhibits azoreductase activity. Catalyzes the reductive cleavage of the azo bond in aromatic azo compounds to the corresponding amines. In Methylorubrum populi (strain ATCC BAA-705 / NCIMB 13946 / BJ001) (Methylobacterium populi), this protein is FMN-dependent NADH:quinone oxidoreductase.